The following is a 966-amino-acid chain: Regulator of telomere elongation helicase 1 homolog (966 aa).

The Helicase ATP-binding domain occupies 7-284 (AGIPVHFPFE…QDMAGDEPKD (278 aa)). An ATP-binding site is contributed by 42 to 49 (SPTGTGKT). 4 residues coordinate [4Fe-4S] cluster: cysteine 146, cysteine 164, cysteine 173, and cysteine 209. The DEAH box signature appears at 233 to 236 (DEAH). The segment at 844 to 864 (VKIHKRERSSPTAPESTSQVS) is disordered. The span at 853–863 (SPTAPESTSQV) shows a compositional bias: polar residues. The residue at position 855 (threonine 855) is a Phosphothreonine.

This sequence belongs to the helicase family. RAD3/XPD subfamily.

The protein resides in the nucleus. The catalysed reaction is ATP + H2O = ADP + phosphate + H(+). Functionally, a probable ATP-dependent DNA helicase implicated in DNA repair and the maintenance of genomic stability. Acts as an anti-recombinase to counteract toxic recombination and limit crossover during meiosis. Regulates meiotic recombination and crossover homeostasis by physically dissociating strand invasion events and thereby promotes noncrossover repair by meiotic synthesis dependent strand annealing (SDSA) as well as disassembly of D loop recombination intermediates. The protein is Regulator of telomere elongation helicase 1 homolog of Drosophila sechellia (Fruit fly).